Reading from the N-terminus, the 233-residue chain is Protein Thf1 (233 aa).

The stretch at 183 to 204 (DKFSKDLELYRSNLDKMTQALA) forms a coiled coil. Positions 212 to 233 (ADRKKREQRQQQASTPVAPPNE) are disordered.

It belongs to the THF1 family.

Functionally, may be involved in photosynthetic membrane biogenesis. The chain is Protein Thf1 from Nostoc sp. (strain PCC 7120 / SAG 25.82 / UTEX 2576).